Here is a 498-residue protein sequence, read N- to C-terminus: Ribosomal RNA small subunit methyltransferase G 2 (498 aa).

Positions 1 to 230 (MRNGTIRYPG…FQRLGPPTRI (230 aa)) are methyltransferase G. S-adenosyl-L-methionine contacts are provided by Gly89, Met94, and Arg154. Residues 231 to 498 (RKETAMKRHG…SQTKHSPAPA (268 aa)) form a methyltransferase TrmH family region.

It in the N-terminal section; belongs to the methyltransferase superfamily. RNA methyltransferase RsmG family. In the C-terminal section; belongs to the class IV-like SAM-binding methyltransferase superfamily. RNA methyltransferase TrmH family.

It is found in the cytoplasm. The catalysed reaction is guanosine(527) in 16S rRNA + S-adenosyl-L-methionine = N(7)-methylguanosine(527) in 16S rRNA + S-adenosyl-L-homocysteine. In terms of biological role, specifically methylates the N7 position of guanine in position 527 of 16S rRNA. In Syntrophobacter fumaroxidans (strain DSM 10017 / MPOB), this protein is Ribosomal RNA small subunit methyltransferase G 2 (rsmG2).